Here is an 86-residue protein sequence, read N- to C-terminus: Anti-adapter protein IraP (86 aa).

A coiled-coil region spans residues 1-36 (MKNLIAELLFKLAQKEEESKELCAQVEALEIIVTAM).

Belongs to the IraP family. As to quaternary structure, interacts with RssB.

The protein resides in the cytoplasm. Its function is as follows. Inhibits RpoS proteolysis by regulating RssB activity, thereby increasing the stability of the sigma stress factor RpoS especially during phosphate starvation, but also in stationary phase and during nitrogen starvation. Its effect on RpoS stability is due to its interaction with RssB, which probably blocks the interaction of RssB with RpoS, and the consequent delivery of the RssB-RpoS complex to the ClpXP protein degradation pathway. The protein is Anti-adapter protein IraP of Shigella flexneri serotype 5b (strain 8401).